The sequence spans 165 residues: Crossover junction endodeoxyribonuclease RuvC (165 aa).

Catalysis depends on residues Asp-7, Glu-67, and Asp-140. The Mg(2+) site is built by Asp-7, Glu-67, and Asp-140.

The protein belongs to the RuvC family. In terms of assembly, homodimer which binds Holliday junction (HJ) DNA. The HJ becomes 2-fold symmetrical on binding to RuvC with unstacked arms; it has a different conformation from HJ DNA in complex with RuvA. In the full resolvosome a probable DNA-RuvA(4)-RuvB(12)-RuvC(2) complex forms which resolves the HJ. It depends on Mg(2+) as a cofactor.

It localises to the cytoplasm. It catalyses the reaction Endonucleolytic cleavage at a junction such as a reciprocal single-stranded crossover between two homologous DNA duplexes (Holliday junction).. In terms of biological role, the RuvA-RuvB-RuvC complex processes Holliday junction (HJ) DNA during genetic recombination and DNA repair. Endonuclease that resolves HJ intermediates. Cleaves cruciform DNA by making single-stranded nicks across the HJ at symmetrical positions within the homologous arms, yielding a 5'-phosphate and a 3'-hydroxyl group; requires a central core of homology in the junction. The consensus cleavage sequence is 5'-(A/T)TT(C/G)-3'. Cleavage occurs on the 3'-side of the TT dinucleotide at the point of strand exchange. HJ branch migration catalyzed by RuvA-RuvB allows RuvC to scan DNA until it finds its consensus sequence, where it cleaves and resolves the cruciform DNA. In Desulfitobacterium hafniense (strain DSM 10664 / DCB-2), this protein is Crossover junction endodeoxyribonuclease RuvC.